A 165-amino-acid chain; its full sequence is Large ribosomal subunit protein uL10 (165 aa).

The protein belongs to the universal ribosomal protein uL10 family. As to quaternary structure, part of the ribosomal stalk of the 50S ribosomal subunit. The N-terminus interacts with L11 and the large rRNA to form the base of the stalk. The C-terminus forms an elongated spine to which L12 dimers bind in a sequential fashion forming a multimeric L10(L12)X complex.

In terms of biological role, forms part of the ribosomal stalk, playing a central role in the interaction of the ribosome with GTP-bound translation factors. This Dechloromonas aromatica (strain RCB) protein is Large ribosomal subunit protein uL10.